A 451-amino-acid chain; its full sequence is Probable D-serine dehydratase (451 aa).

Lys-119 is modified (N6-(pyridoxal phosphate)lysine).

The protein belongs to the serine/threonine dehydratase family. DsdA subfamily. It depends on pyridoxal 5'-phosphate as a cofactor.

It catalyses the reaction D-serine = pyruvate + NH4(+). The chain is Probable D-serine dehydratase from Acidovorax sp. (strain JS42).